The chain runs to 34 residues: Small ribosomal subunit protein uS2c (34 aa).

It belongs to the universal ribosomal protein uS2 family.

It is found in the plastid. It localises to the chloroplast. This chain is Small ribosomal subunit protein uS2c (rps2), found in Ochrosphaera neapolitana.